Reading from the N-terminus, the 318-residue chain is ATP synthase gamma chain (318 aa).

It belongs to the ATPase gamma chain family. F-type ATPases have 2 components, CF(1) - the catalytic core - and CF(0) - the membrane proton channel. CF(1) has five subunits: alpha(3), beta(3), gamma(1), delta(1), epsilon(1). CF(0) has three main subunits: a, b and c.

It is found in the cell membrane. Produces ATP from ADP in the presence of a proton gradient across the membrane. The gamma chain is believed to be important in regulating ATPase activity and the flow of protons through the CF(0) complex. This Lactobacillus gasseri (strain ATCC 33323 / DSM 20243 / BCRC 14619 / CIP 102991 / JCM 1131 / KCTC 3163 / NCIMB 11718 / NCTC 13722 / AM63) protein is ATP synthase gamma chain.